Consider the following 192-residue polypeptide: MNLPIKSNAASKEKLLTLLALKAYKNGNFTLSSGNKSNHYVNCKPVSLSGNGLLLLSNMMLENVEPDSLAVAGLTLGADPLVCGVALAATYAGRKLDALIVRKEPKGYGTASWLEGPLPPAGSVITVLEDVVTTGRSSLKAVNQLQNAGYRVNRIISIVDRQEGGAFEIKKAGLDLVSLFVLDEVYEKFKNT.

5-phospho-alpha-D-ribose 1-diphosphate-binding positions include Arg102, Lys103, Lys106, and Glu129 to Ser137. Positions 133 and 161 each coordinate orotate.

It belongs to the purine/pyrimidine phosphoribosyltransferase family. PyrE subfamily. Homodimer. Mg(2+) is required as a cofactor.

It catalyses the reaction orotidine 5'-phosphate + diphosphate = orotate + 5-phospho-alpha-D-ribose 1-diphosphate. Its pathway is pyrimidine metabolism; UMP biosynthesis via de novo pathway; UMP from orotate: step 1/2. In terms of biological role, catalyzes the transfer of a ribosyl phosphate group from 5-phosphoribose 1-diphosphate to orotate, leading to the formation of orotidine monophosphate (OMP). This chain is Orotate phosphoribosyltransferase, found in Prochlorococcus marinus (strain SARG / CCMP1375 / SS120).